Reading from the N-terminus, the 393-residue chain is Branched-chain-amino-acid aminotransferase, mitochondrial (393 aa).

Residues 1–16 constitute a mitochondrion transit peptide; that stretch reads MLQRHSLKLGKFSIRT. Lysine 219 carries the N6-(pyridoxal phosphate)lysine modification. The residue at position 315 (threonine 315) is a Phosphothreonine.

It belongs to the class-IV pyridoxal-phosphate-dependent aminotransferase family. Pyridoxal 5'-phosphate is required as a cofactor.

The protein resides in the mitochondrion matrix. The enzyme catalyses L-leucine + 2-oxoglutarate = 4-methyl-2-oxopentanoate + L-glutamate. The catalysed reaction is L-isoleucine + 2-oxoglutarate = (S)-3-methyl-2-oxopentanoate + L-glutamate. It catalyses the reaction L-valine + 2-oxoglutarate = 3-methyl-2-oxobutanoate + L-glutamate. It carries out the reaction a 2-oxocarboxylate + L-methionine = 4-methylsulfanyl-2-oxobutanoate + an L-alpha-amino acid. Its pathway is amino-acid biosynthesis; L-isoleucine biosynthesis; L-isoleucine from 2-oxobutanoate: step 4/4. It functions in the pathway amino-acid biosynthesis; L-leucine biosynthesis; L-leucine from 3-methyl-2-oxobutanoate: step 4/4. It participates in amino-acid biosynthesis; L-valine biosynthesis; L-valine from pyruvate: step 4/4. The protein operates within amino-acid biosynthesis; L-methionine biosynthesis via salvage pathway; L-methionine from S-methyl-5-thio-alpha-D-ribose 1-phosphate: step 6/6. Functionally, mitochondrial isozyme of branched-chain-amino-acid aminotransferase, involved in the biosynthesis of the branched chain amino acids (BCAAs) leucine, isoleucine, and valine. Catalyzes the formation of methionine from 2-keto-4-methylthiobutyrate (KMTB) in the methionine salvage pathway primarily using BCAAs (leucine, isoleucine, and valine) as the amino donors. Appears to be involved in the regulation of the cell cycle, although this may be indirect via metabolic changes. Connects BCAAs and TCA-cycle metabolism governing TCA-cycle flux to activate TORC1 signaling. High copy suppressor of a temperature-sensitive mutation in the ABC transporter, ATM1. This chain is Branched-chain-amino-acid aminotransferase, mitochondrial, found in Saccharomyces cerevisiae (strain ATCC 204508 / S288c) (Baker's yeast).